Reading from the N-terminus, the 286-residue chain is Large ribosomal subunit protein uL2 (286 aa).

2 disordered regions span residues 22–59 and 215–286; these read KELTPGYTPERSLLRPKTKTGGRNNQGKITSRHRGGGH and LGRR…KLHK. A compositionally biased stretch (basic and acidic residues) spans 230–240; sequence DHPHGGGEGRT. A compositionally biased stretch (basic residues) spans 255–286; sequence KGGRTRQKRKPSNSSIVRRRKSRRYGQLKLHK.

It belongs to the universal ribosomal protein uL2 family. Part of the 50S ribosomal subunit. Forms a bridge to the 30S subunit in the 70S ribosome.

In terms of biological role, one of the primary rRNA binding proteins. Required for association of the 30S and 50S subunits to form the 70S ribosome, for tRNA binding and peptide bond formation. It has been suggested to have peptidyltransferase activity; this is somewhat controversial. Makes several contacts with the 16S rRNA in the 70S ribosome. The polypeptide is Large ribosomal subunit protein uL2 (Rhodopirellula baltica (strain DSM 10527 / NCIMB 13988 / SH1)).